Consider the following 484-residue polypeptide: MPGTPVSDLSAATAVDATALLPLPVARPSAPAMVRGKLYIKTHGCQMNEYDSAKMADVLAASEGLELTDDPEEADVVLVNTCSIREKAQEKVFSQLGRWKALKAGGKPVIIGVGGCVASQEGEAIVKRAPYVDLVFGPQTLHRLPELIRARRESGKSQVDISFPEIEKFDRLPEPRAEGPSAFVSIMEGCSKYCSFCVVPYTRGEEVSRPFEDVLVEVAQLAAQGVREINLLGQNVNAYRGAYGADAGDAAQYADLGLLIRTIAQIEGIGRIRFTTSHPLEFSDSLVDAYRDVPQLANYLHLPVQAGSDRILSAMKRGYTALEFKSKIRKLRAVRPDISISSDFIVGFPGETEADFEKTMKLIEDVGFDQSFSFVYSRRPGTPASDLQDDTPEAVKQARLARLQAHINAHAASISQSMVGSVQRVLVEGPSRRDPNELTGKSENMRPVNFPGNPRLIGQFVDVLITEAMSNSLRGRIQLDDSAH.

Residues 36-153 (GKLYIKTHGC…LPELIRARRE (118 aa)) form the MTTase N-terminal domain. C45, C82, C116, C190, C194, and C197 together coordinate [4Fe-4S] cluster. Residues 176-415 (RAEGPSAFVS…HINAHAASIS (240 aa)) enclose the Radical SAM core domain. In terms of domain architecture, TRAM spans 416 to 479 (QSMVGSVQRV…SNSLRGRIQL (64 aa)). Residues 428–450 (EGPSRRDPNELTGKSENMRPVNF) form a disordered region.

This sequence belongs to the methylthiotransferase family. MiaB subfamily. As to quaternary structure, monomer. [4Fe-4S] cluster serves as cofactor.

The protein resides in the cytoplasm. The enzyme catalyses N(6)-dimethylallyladenosine(37) in tRNA + (sulfur carrier)-SH + AH2 + 2 S-adenosyl-L-methionine = 2-methylsulfanyl-N(6)-dimethylallyladenosine(37) in tRNA + (sulfur carrier)-H + 5'-deoxyadenosine + L-methionine + A + S-adenosyl-L-homocysteine + 2 H(+). Functionally, catalyzes the methylthiolation of N6-(dimethylallyl)adenosine (i(6)A), leading to the formation of 2-methylthio-N6-(dimethylallyl)adenosine (ms(2)i(6)A) at position 37 in tRNAs that read codons beginning with uridine. The chain is tRNA-2-methylthio-N(6)-dimethylallyladenosine synthase from Xanthomonas axonopodis pv. citri (strain 306).